Consider the following 205-residue polypeptide: Putative 3-methyladenine DNA glycosylase (205 aa).

The protein belongs to the DNA glycosylase MPG family.

The sequence is that of Putative 3-methyladenine DNA glycosylase from Clostridium perfringens (strain SM101 / Type A).